Consider the following 288-residue polypeptide: Bifunctional protein FolD 2 (288 aa).

NADP(+) contacts are provided by residues 166-168 (GRS) and Ser-191.

The protein belongs to the tetrahydrofolate dehydrogenase/cyclohydrolase family. In terms of assembly, homodimer.

It catalyses the reaction (6R)-5,10-methylene-5,6,7,8-tetrahydrofolate + NADP(+) = (6R)-5,10-methenyltetrahydrofolate + NADPH. The catalysed reaction is (6R)-5,10-methenyltetrahydrofolate + H2O = (6R)-10-formyltetrahydrofolate + H(+). Its pathway is one-carbon metabolism; tetrahydrofolate interconversion. Catalyzes the oxidation of 5,10-methylenetetrahydrofolate to 5,10-methenyltetrahydrofolate and then the hydrolysis of 5,10-methenyltetrahydrofolate to 10-formyltetrahydrofolate. The polypeptide is Bifunctional protein FolD 2 (Frankia casuarinae (strain DSM 45818 / CECT 9043 / HFP020203 / CcI3)).